The chain runs to 427 residues: Dihydroorotase (427 aa).

2 residues coordinate Zn(2+): His60 and His62. Substrate is bound by residues 62–64 (HLR) and Asn94. Asp152, His179, and His232 together coordinate Zn(2+). Asn278 lines the substrate pocket. Zn(2+) is bound at residue Asp305. Asp305 is a catalytic residue. Substrate-binding positions include His309 and 323-324 (FG).

The protein belongs to the metallo-dependent hydrolases superfamily. DHOase family. Class I DHOase subfamily. Zn(2+) serves as cofactor.

It carries out the reaction (S)-dihydroorotate + H2O = N-carbamoyl-L-aspartate + H(+). The protein operates within pyrimidine metabolism; UMP biosynthesis via de novo pathway; (S)-dihydroorotate from bicarbonate: step 3/3. Its function is as follows. Catalyzes the reversible cyclization of carbamoyl aspartate to dihydroorotate. The sequence is that of Dihydroorotase from Bacillus caldolyticus.